A 331-amino-acid chain; its full sequence is 4-hydroxythreonine-4-phosphate dehydrogenase (331 aa).

The substrate site is built by histidine 137 and threonine 138. A divalent metal cation-binding residues include histidine 167, histidine 212, and histidine 267. Positions 275, 284, and 293 each coordinate substrate.

Belongs to the PdxA family. Homodimer. The cofactor is Zn(2+). Requires Mg(2+) as cofactor. It depends on Co(2+) as a cofactor.

The protein resides in the cytoplasm. The catalysed reaction is 4-(phosphooxy)-L-threonine + NAD(+) = 3-amino-2-oxopropyl phosphate + CO2 + NADH. The protein operates within cofactor biosynthesis; pyridoxine 5'-phosphate biosynthesis; pyridoxine 5'-phosphate from D-erythrose 4-phosphate: step 4/5. Functionally, catalyzes the NAD(P)-dependent oxidation of 4-(phosphooxy)-L-threonine (HTP) into 2-amino-3-oxo-4-(phosphooxy)butyric acid which spontaneously decarboxylates to form 3-amino-2-oxopropyl phosphate (AHAP). The sequence is that of 4-hydroxythreonine-4-phosphate dehydrogenase from Yersinia pestis bv. Antiqua (strain Angola).